The chain runs to 44 residues: Thymosin beta (44 aa).

The span at 1–17 shows a compositional bias: basic and acidic residues; it reads MSDKPDVKEVESFDKTT. Residues 1–44 are disordered; sequence MSDKPDVKEVESFDKTTLKKTTTNEKNTLPTKEVIEQEKSGGSD. Low complexity predominate over residues 19–32; that stretch reads KKTTTNEKNTLPTK. A compositionally biased stretch (basic and acidic residues) spans 33–44; the sequence is EVIEQEKSGGSD.

It belongs to the thymosin beta family.

Its subcellular location is the cytoplasm. It is found in the cytoskeleton. Functionally, plays an important role in the organization of the cytoskeleton. Binds to and sequesters actin monomers (G actin) and therefore inhibits actin polymerization. The protein is Thymosin beta of Gillichthys mirabilis (Long-jawed mudsucker).